A 190-amino-acid polypeptide reads, in one-letter code: Peptide deformylase (190 aa).

Residues cysteine 94 and histidine 136 each contribute to the Fe cation site. The active site involves glutamate 137. Residue histidine 140 participates in Fe cation binding.

The protein belongs to the polypeptide deformylase family. Fe(2+) serves as cofactor.

The enzyme catalyses N-terminal N-formyl-L-methionyl-[peptide] + H2O = N-terminal L-methionyl-[peptide] + formate. Its function is as follows. Removes the formyl group from the N-terminal Met of newly synthesized proteins. Requires at least a dipeptide for an efficient rate of reaction. N-terminal L-methionine is a prerequisite for activity but the enzyme has broad specificity at other positions. The polypeptide is Peptide deformylase (Chlorobium phaeovibrioides (strain DSM 265 / 1930) (Prosthecochloris vibrioformis (strain DSM 265))).